The primary structure comprises 470 residues: Ribulose bisphosphate carboxylase large chain (470 aa).

The residue at position 5 (K5) is an N6,N6,N6-trimethyllysine. The substrate site is built by N114 and T164. K166 acts as the Proton acceptor in catalysis. K168 is a binding site for substrate. Residues K192, D194, and E195 each contribute to the Mg(2+) site. At K192 the chain carries N6-carboxylysine. H285 serves as the catalytic Proton acceptor. 3 residues coordinate substrate: R286, H318, and S370.

This sequence belongs to the RuBisCO large chain family. Type I subfamily. Heterohexadecamer of 8 large chains and 8 small chains; disulfide-linked. The disulfide link is formed within the large subunit homodimers. Mg(2+) is required as a cofactor. In terms of processing, the disulfide bond which can form in the large chain dimeric partners within the hexadecamer appears to be associated with oxidative stress and protein turnover.

The protein resides in the plastid. Its subcellular location is the chloroplast. It carries out the reaction 2 (2R)-3-phosphoglycerate + 2 H(+) = D-ribulose 1,5-bisphosphate + CO2 + H2O. It catalyses the reaction D-ribulose 1,5-bisphosphate + O2 = 2-phosphoglycolate + (2R)-3-phosphoglycerate + 2 H(+). RuBisCO catalyzes two reactions: the carboxylation of D-ribulose 1,5-bisphosphate, the primary event in carbon dioxide fixation, as well as the oxidative fragmentation of the pentose substrate in the photorespiration process. Both reactions occur simultaneously and in competition at the same active site. The chain is Ribulose bisphosphate carboxylase large chain from Bertiera breviflora.